A 373-amino-acid polypeptide reads, in one-letter code: MTDADFAEQLKDLDTTLRNIESVLDIDRLRADKARLEEAASAPDLWDDQARAQQVTSQLSYVNGEITKLTDLRSRLDDTQVLLELAEAESDPGVLTEVAAEITGLAKSIDEMEVRTLLSGEYDSREALVAIRAGAGGVDAADFAEMLLRMYLRWAERHGYPTEVYETSYAEEAGLKSATFTVKVPYAYGTLSVESGTHRLVRISPFDNQGRRQTSFAGVEVLPVVEQTDHIDIPENEMRTDVYRSSGPGGQSVNTTDSAVRITHIPTGIVVTCQNEKSQLQNKASALRVLQARLLERKRQEEQAKLQGLKTDAAGSWGDQMRSYVLHPYQMVKDLRTEQETGSPSSVFDGELDAFIEAGIRWRKQQQLSGDNV.

At Q251 the chain carries N5-methylglutamine.

It belongs to the prokaryotic/mitochondrial release factor family. In terms of processing, methylated by PrmC. Methylation increases the termination efficiency of RF2.

The protein resides in the cytoplasm. Peptide chain release factor 2 directs the termination of translation in response to the peptide chain termination codons UGA and UAA. The protein is Peptide chain release factor 2 of Salinispora arenicola (strain CNS-205).